The sequence spans 72 residues: Large ribosomal subunit protein bL28 (72 aa).

Belongs to the bacterial ribosomal protein bL28 family.

The chain is Large ribosomal subunit protein bL28 from Chlorobium limicola (strain DSM 245 / NBRC 103803 / 6330).